A 418-amino-acid chain; its full sequence is Homoaconitase large subunit (418 aa).

[4Fe-4S] cluster is bound by residues Cys-292, Cys-352, and Cys-355.

The protein belongs to the aconitase/IPM isomerase family. In terms of assembly, heterodimer of HacA and HacB. [4Fe-4S] cluster serves as cofactor.

It catalyses the reaction (2R,3S)-homoisocitrate = cis-homoaconitate + H2O. Its pathway is amino-acid biosynthesis; L-lysine biosynthesis via AAA pathway; L-alpha-aminoadipate from 2-oxoglutarate: step 3/5. With respect to regulation, is not inhibited by lysine. In terms of biological role, catalyzes the reversible hydration of cis-homoaconitate ((Z)-but-1-ene-1,2,4-tricarboxylate) to homoisocitrate ((1R,2S)-1-hydroxybutane-1,2,4-tricarboxylate). Can catalyze neither the dehydration of (R)-homocitrate ((2R)-2-hydroxybutane-1,2,4-tricarboxylate) into cis-homoaconitate in vitro, nor the reverse reaction. Is not active toward (S)-homocitrate, cis-aconitate or citrate as substrate. The chain is Homoaconitase large subunit (hacA) from Thermus thermophilus (strain ATCC BAA-163 / DSM 7039 / HB27).